The sequence spans 142 residues: Small ribosomal subunit protein uS12 (142 aa).

The disordered stretch occupies residues 1 to 22; it reads MPTFNQLVRKGRKAAKKKSTAP. Residues 9-19 show a composition bias toward basic residues; the sequence is RKGRKAAKKKS. Asp-102 is subject to 3-methylthioaspartic acid.

Belongs to the universal ribosomal protein uS12 family. As to quaternary structure, part of the 30S ribosomal subunit. Contacts proteins S8 and S17. May interact with IF1 in the 30S initiation complex.

Its function is as follows. With S4 and S5 plays an important role in translational accuracy. Interacts with and stabilizes bases of the 16S rRNA that are involved in tRNA selection in the A site and with the mRNA backbone. Located at the interface of the 30S and 50S subunits, it traverses the body of the 30S subunit contacting proteins on the other side and probably holding the rRNA structure together. The combined cluster of proteins S8, S12 and S17 appears to hold together the shoulder and platform of the 30S subunit. The protein is Small ribosomal subunit protein uS12 of Acetivibrio thermocellus (strain ATCC 27405 / DSM 1237 / JCM 9322 / NBRC 103400 / NCIMB 10682 / NRRL B-4536 / VPI 7372) (Clostridium thermocellum).